Here is a 372-residue protein sequence, read N- to C-terminus: Fatty acid 2-hydroxylase (372 aa).

Positions Ala-8–Arg-86 constitute a Cytochrome b5 heme-binding domain. The heme site is built by His-43 and His-69. Transmembrane regions (helical) follow at residues Val-168–Tyr-188 and Ser-213–Ile-233. A Fatty acid hydroxylase domain is found at Phe-219–Thr-361. Zn(2+)-binding residues include His-234, His-239, His-257, His-260, and His-261. 2 consecutive transmembrane segments (helical) span residues Val-271–Ile-291 and Leu-292–Asp-312. Zn(2+)-binding residues include His-315, His-319, His-336, His-339, and His-340.

Belongs to the sterol desaturase family. SCS7 subfamily. It depends on Zn(2+) as a cofactor.

Its subcellular location is the endoplasmic reticulum membrane. It is found in the microsome membrane. The enzyme catalyses a 1,2-saturated fatty acid + 2 Fe(II)-[cytochrome b5] + O2 + 2 H(+) = a (R)-2-hydroxy fatty acid + 2 Fe(III)-[cytochrome b5] + H2O. It carries out the reaction hexadecanoate + 2 Fe(II)-[cytochrome b5] + O2 + 2 H(+) = (R)-2-hydroxyhexadecanoate + 2 Fe(III)-[cytochrome b5] + H2O. It catalyses the reaction octadecanoate + 2 Fe(II)-[cytochrome b5] + O2 + 2 H(+) = (R)-2-hydroxyoctadecanoate + 2 Fe(III)-[cytochrome b5] + H2O. The catalysed reaction is docosanoate + 2 Fe(II)-[cytochrome b5] + O2 + 2 H(+) = 2-hydroxydocosanoate + 2 Fe(III)-[cytochrome b5] + H2O. The enzyme catalyses tetracosanoate + 2 Fe(II)-[cytochrome b5] + O2 + 2 H(+) = (R)-2-hydroxytetracosanoate + 2 Fe(III)-[cytochrome b5] + H2O. It functions in the pathway lipid metabolism; fatty acid metabolism. The protein operates within sphingolipid metabolism; galactosylceramide biosynthesis. In terms of biological role, catalyzes the hydroxylation of free fatty acids at the C-2 position to produce 2-hydroxy fatty acids, which are building blocks of sphingolipids and glycosphingolipids common in neural tissue and epidermis. FA2H is stereospecific for the production of (R)-2-hydroxy fatty acids. Plays an essential role in the synthesis of galactosphingolipids of the myelin sheath. Responsible for the synthesis of sphingolipids and glycosphingolipids involved in the formation of epidermal lamellar bodies critical for skin permeability barrier. Participates in the synthesis of glycosphingolipids and a fraction of type II wax diesters in sebaceous gland, specifically regulating hair follicle homeostasis. Involved in the synthesis of sphingolipids of plasma membrane rafts, controlling lipid raft mobility and trafficking of raft-associated proteins. This is Fatty acid 2-hydroxylase (FA2H) from Macaca fascicularis (Crab-eating macaque).